The following is a 336-amino-acid chain: Nuclear envelope-associated protein 3 (336 aa).

Coiled-coil stretches lie at residues 14–87 and 128–261; these read LKDL…IRAS and VLSK…LKKK. A Bipartite nuclear localization signal motif is present at residues 240–261; sequence KTKELEDQVENQRRIDQELKKK. The helical transmembrane segment at 313 to 330 threads the bilayer; sequence LWDKSGFKIVVSMSMLIL.

Forms homomers and heteromers with NEAP1 and NEAP2. Interacts with SUN1 and SUN2.

It localises to the nucleus inner membrane. The protein resides in the nucleus. The protein localises to the nucleoplasm. This Arabidopsis thaliana (Mouse-ear cress) protein is Nuclear envelope-associated protein 3.